The following is a 352-amino-acid chain: tRNA pseudouridine synthase D (352 aa).

The active-site Nucleophile is aspartate 81. The TRUD domain occupies 157-303 (GVPNYFGTQR…MDHERRILRL (147 aa)).

The protein belongs to the pseudouridine synthase TruD family.

The enzyme catalyses uridine(13) in tRNA = pseudouridine(13) in tRNA. Responsible for synthesis of pseudouridine from uracil-13 in transfer RNAs. This Pseudomonas putida (strain ATCC 700007 / DSM 6899 / JCM 31910 / BCRC 17059 / LMG 24140 / F1) protein is tRNA pseudouridine synthase D.